Here is a 333-residue protein sequence, read N- to C-terminus: Biotin synthase (333 aa).

The 230-residue stretch at 47–276 (FFKNQMEFCS…KSEIRLCGGR (230 aa)) folds into the Radical SAM core domain. [4Fe-4S] cluster is bound by residues cysteine 65, cysteine 69, and cysteine 72. [2Fe-2S] cluster is bound by residues cysteine 109, cysteine 141, cysteine 201, and arginine 271.

This sequence belongs to the radical SAM superfamily. Biotin synthase family. In terms of assembly, homodimer. It depends on [4Fe-4S] cluster as a cofactor. [2Fe-2S] cluster serves as cofactor.

It catalyses the reaction (4R,5S)-dethiobiotin + (sulfur carrier)-SH + 2 reduced [2Fe-2S]-[ferredoxin] + 2 S-adenosyl-L-methionine = (sulfur carrier)-H + biotin + 2 5'-deoxyadenosine + 2 L-methionine + 2 oxidized [2Fe-2S]-[ferredoxin]. The protein operates within cofactor biosynthesis; biotin biosynthesis; biotin from 7,8-diaminononanoate: step 2/2. Catalyzes the conversion of dethiobiotin (DTB) to biotin by the insertion of a sulfur atom into dethiobiotin via a radical-based mechanism. The sequence is that of Biotin synthase from Sulfurihydrogenibium sp. (strain YO3AOP1).